The chain runs to 1600 residues: Eukaryotic translation initiation factor 4 gamma 1 (1600 aa).

The tract at residues 1–88 (MNKAPQPTGP…ARPGPAPHVY (88 aa)) is disordered. The span at 7–24 (PTGPPPARSPGLPQPAFP) shows a compositional bias: pro residues. Ser15 is subject to Phosphoserine. Positions 34–48 (STPQATQMNTPSQPR) are enriched in polar residues. Over residues 60 to 79 (PSRAQPPSSAASRVQSAAPA) the composition is skewed to low complexity. Omega-N-methylarginine is present on residues Arg80 and Arg117. 5 disordered regions span residues 173–230 (NQPP…NGES), 243–326 (SQGA…LSPE), 366–501 (ETHE…QLSQ), 507–526 (AATQ…KELN), and 541–606 (VDPA…DQWK). A PABPC1-binding region spans residues 179 to 207 (APKRERKTIRIRDPNQGGKDITEEIMSGA). Residues 208 to 220 (RTASTPTPPQTGG) are compositionally biased toward polar residues. Thr214 carries the phosphothreonine modification. Ser230 is modified (phosphoserine). The span at 269–280 (SPSPTPSPPPIL) shows a compositional bias: pro residues. Phosphoserine is present on Ser324. A compositionally biased stretch (low complexity) spans 438 to 449 (KVSSAALASILS). Residues 463 to 479 (QEEEMEEDDDDEEGGEA) show a composition bias toward acidic residues. A compositionally biased stretch (polar residues) spans 551-562 (QPPTGSNPSPES). Basic and acidic residues-rich tracts occupy residues 578–587 (WDSKEDKIHN) and 596–606 (QKYEYKSDQWK). Lys606 bears the N6-acetyllysine mark. Residues 611 to 622 (EEKKRYDREFLL) are EIF4E-binding. The residue at position 651 (Thr651) is a Phosphothreonine. Disordered stretches follow at residues 667–719 (GPDF…TRKI) and 734–760 (AEKA…DGSK). Residues 686–1089 (GPPRGGPGGE…GSIDSNNQLF (404 aa)) form an eIF3/EIF4A-binding region. 2 positions are modified to omega-N-methylarginine: Arg689 and Arg698. A compositionally biased stretch (low complexity) spans 697–707 (PRGPAGLGPRR). Residues 745–760 (TAADKDRGEEDADGSK) are compositionally biased toward basic and acidic residues. An MIF4G domain is found at 765 to 993 (FRRVRSILNK…QDVLDLRQSN (229 aa)). 2 disordered regions span residues 1029–1117 (AKGS…SEAT) and 1129–1238 (QQTL…AALS). Phosphoserine is present on Ser1032. Omega-N-methylarginine occurs at positions 1036 and 1046. Ser1081 and Ser1096 each carry phosphoserine. Lys1099 bears the N6-acetyllysine mark. Residues Ser1147 and Ser1149 each carry the phosphoserine modification. Residues 1148 to 1180 (LSRERGEKAGDRGDRLERSERGGDRGDRLDRAR) are compositionally biased toward basic and acidic residues. Ser1187 carries the phosphoserine; by PKC/PRKCA modification. Positions 1188-1225 (FSKEVEERSRERPSQPEGLRKAASLTEDRGRDPVKREA) are enriched in basic and acidic residues. Residues Ser1189, Ser1196, and Ser1211 each carry the phosphoserine modification. Position 1213 is a phosphothreonine (Thr1213). Phosphoserine occurs at positions 1231 and 1238. Positions 1241 to 1363 (EVEKKSKAII…PMGELFREIT (123 aa)) constitute an MI domain. A W2 domain is found at 1429–1599 (ESEAPGQRTL…REAEDEESDH (171 aa)). The interval 1450-1600 (LLKDGGSNQR…EAEDEESDHN (151 aa)) is EIF4A-binding. Positions 1585–1600 (FFNWLREAEDEESDHN) are necessary but not sufficient for MKNK1-binding. Residue Ser1597 is modified to Phosphoserine.

This sequence belongs to the eukaryotic initiation factor 4G family. In terms of assembly, eIF4F is a multi-subunit complex, the composition of which varies with external and internal environmental conditions. It is composed of at least EIF4A, EIF4E (cap-binding) and EIF4G1/EIF4G3. Interacts with eIF3 complex, mutually exclusive with EIF4A1 or EIF4A2, EIF4E and through its N-terminus with PABPC1. Interacts with EIF4E or with EIF1 (mutually exclusive) through a common binding site. Interacts through its C-terminus with the serine/threonine kinases MKNK1, and with MKNK2. Appears to act as a scaffold protein, holding these enzymes in place to phosphorylate EIF4E. Non-phosphorylated EIF4EBP1 competes with EIF4G1/EIF4G3 to interact with EIF4E; insulin stimulated MAP-kinase (MAPK1 and MAPK3) phosphorylation of EIF4EBP1 causes dissociation of the complex allowing EIF4G1/EIF4G3 to bind and consequent initiation of translation. EIF4G1/EIF4G3 interacts with PABPC1 to bring about circularization of the mRNA. Interacts with EIF4E3. Interacts with CIRBP and MIF4GD. Interacts with RBM4. Interacts with HNRNPD/AUF1; the interaction requires RNA. Interacts with DDX3X; the interaction requires RNA. Interacts with DAZAP2. (Microbial infection) Interacts with murine norovirus viral genome-linked protein (via C-terminus); this interaction plays a role in translation of viral proteins. In terms of processing, phosphorylated at multiple sites in vivo. Phosphorylation at Ser-1187 by PRKCA induces binding to MKNK1.

The protein localises to the cytoplasm. It localises to the nucleus. It is found in the stress granule. Component of the protein complex eIF4F, which is involved in the recognition of the mRNA cap, ATP-dependent unwinding of 5'-terminal secondary structure and recruitment of mRNA to the ribosome. Exists in two complexes, either with EIF1 or with EIF4E (mutually exclusive). Together with EIF1, is required for leaky scanning, in particular for avoiding cap-proximal start codon. Together with EIF4E, antagonizes the scanning promoted by EIF1-EIF4G1 and locates the start codon (through a TISU element) without scanning. As a member of the eIF4F complex, required for endoplasmic reticulum stress-induced ATF4 mRNA translation. This Mus musculus (Mouse) protein is Eukaryotic translation initiation factor 4 gamma 1 (Eif4g1).